Reading from the N-terminus, the 66-residue chain is Cold shock protein CspC (66 aa).

A CSD domain is found at 4-63; it reads GTVKWFNAEKGFGFIERENGDDVFVHFSAIQSDGFKSLDEGQKVSFDVEQGARGAQAANV.

Its subcellular location is the cytoplasm. This Bacillus subtilis (strain 168) protein is Cold shock protein CspC (cspC).